The primary structure comprises 380 residues: MKKPLGKIVASTALLISVAFSSSIASAAEEAKEKYLIGFNEQEAVSEFVEQVEANDEVAILSEEEEVEIELLHEFETIPVLSVELSPEDVDALELDPAISYIEEDAEVTTMAQSVPWGISRVQAPAAHNRGLTGSGVKVAVLDTGISTHPDLNIRGGASFVPGEPSTQDGNGHGTHVAGTIAALNNSIGVLGVAPNAELYAVKVLGASGSGSVSSIAQGLEWAGNNGMHVANLSLGSPSPSATLEQAVNSATSRGVLVVAASGNSGAGSISYPARYANAMAVGATDQNNNRASFSQYGAGLDIVAPGVNVQSTYPGSTYASLNGTSMATPHVAGAAALVKQKNPSWSNVQIRNHLKNTATSLGSTNLYGSGLVNAEAATR.

The N-terminal stretch at Met1–Ala27 is a signal peptide. A propeptide spanning residues Ala28–Ala112 is cleaved from the precursor. In terms of domain architecture, Inhibitor I9 spans Lys34–Met111. Residue Gln113 coordinates Ca(2+). The 264-residue stretch at Pro116–Thr379 folds into the Peptidase S8 domain. The active-site Charge relay system is the Asp143. Asp151 is a binding site for Ca(2+). The Charge relay system role is filled by His173. Residues Leu184, Asn186, Ile188, Val190, Ala274, Tyr276, and Ala279 each coordinate Ca(2+). Ser326 acts as the Charge relay system in catalysis.

Belongs to the peptidase S8 family. The cofactor is Ca(2+).

Its subcellular location is the secreted. This chain is Alkaline protease, found in Alkalihalobacillus alcalophilus (Bacillus alcalophilus).